A 349-amino-acid chain; its full sequence is MRVLVVDDSALVRMAVTDILTKAGIEVVDTAKNGREAVEKALKLKPDVITLDINMPEMDGLTALKLIMEKQPTPVVMLSSLTKEGARETLEALKIGAVDFVTKPDGALVDLSSVAQELVRKVQMAASTSLNVLRLQNLKKIKGEVVRGNWKGKTKDVCVLIGSSTGGPSALEMIIPRLPADIPAPVFVVQHMPPGFTKQLAERLNSISEVEVKEAENNERVKDGVVYVAPGGYHMKVRRAANVVRIKVVDGEPVNAVKPSVDVTADSVVQAYGGNVVGAILTGMGEDGAYGMKLIKDRGGLTIASSEDTCMVFGMPKAAIELGGITSVKPVFEIAEEIVRFLEVKLNER.

A Response regulatory domain is found at 2 to 118 (RVLVVDDSAL…VDLSSVAQEL (117 aa)). Asp52 is subject to 4-aspartylphosphate. Residues 159–345 (VLIGSSTGGP…EEIVRFLEVK (187 aa)) form the CheB-type methylesterase domain. Active-site residues include Ser164, His191, and Asp287.

The protein belongs to the CheB family. Phosphorylated by CheA. Phosphorylation of the N-terminal regulatory domain activates the methylesterase activity.

The protein localises to the cytoplasm. The enzyme catalyses [protein]-L-glutamate 5-O-methyl ester + H2O = L-glutamyl-[protein] + methanol + H(+). It carries out the reaction L-glutaminyl-[protein] + H2O = L-glutamyl-[protein] + NH4(+). Its function is as follows. Involved in chemotaxis. Part of a chemotaxis signal transduction system that modulates chemotaxis in response to various stimuli. Catalyzes the demethylation of specific methylglutamate residues introduced into the chemoreceptors (methyl-accepting chemotaxis proteins or MCP) by CheR. Also mediates the irreversible deamidation of specific glutamine residues to glutamic acid. This Archaeoglobus fulgidus (strain ATCC 49558 / DSM 4304 / JCM 9628 / NBRC 100126 / VC-16) protein is Protein-glutamate methylesterase/protein-glutamine glutaminase.